The primary structure comprises 253 residues: tRNA1(Val) (adenine(37)-N6)-methyltransferase (253 aa).

It belongs to the methyltransferase superfamily. tRNA (adenine-N(6)-)-methyltransferase family.

The protein localises to the cytoplasm. It catalyses the reaction adenosine(37) in tRNA1(Val) + S-adenosyl-L-methionine = N(6)-methyladenosine(37) in tRNA1(Val) + S-adenosyl-L-homocysteine + H(+). Specifically methylates the adenine in position 37 of tRNA(1)(Val) (anticodon cmo5UAC). The sequence is that of tRNA1(Val) (adenine(37)-N6)-methyltransferase from Dickeya chrysanthemi (strain Ech1591) (Dickeya zeae (strain Ech1591)).